Consider the following 276-residue polypeptide: Phosducin-like protein 1 (276 aa).

4 positions are modified to phosphoserine: Ser18, Ser19, Ser20, and Ser42. Positions 18 to 74 (SSSEGEDNGDEGGDNKGASGKSRCSGLTIDTNPDATPAGGFRQQSSTNTGPKGVVKD) are disordered. The Phosducin domain maps to 62–272 (SSTNTGPKGV…LIEHGIIVDR (211 aa)). The tract at residues 153–276 (FGQVQQLTSH…GIIVDRALYN (124 aa)) is thioredoxin fold.

The protein belongs to the phosducin family. Forms a complex with the beta and gamma subunits of the GTP-binding proteins. Interacts with the CCT chaperonin complex.

Functions as a co-chaperone for CCT in the assembly of heterotrimeric G protein complexes, facilitates the assembly of both Gbeta-Ggamma and RGS-Gbeta5 heterodimers. The sequence is that of Phosducin-like protein 1 from Drosophila melanogaster (Fruit fly).